Here is a 292-residue protein sequence, read N- to C-terminus: 4-hydroxy-tetrahydrodipicolinate synthase (292 aa).

Thr-45 serves as a coordination point for pyruvate. Tyr-133 acts as the Proton donor/acceptor in catalysis. Catalysis depends on Lys-161, which acts as the Schiff-base intermediate with substrate. Ile-203 lines the pyruvate pocket.

This sequence belongs to the DapA family. Homotetramer; dimer of dimers.

Its subcellular location is the cytoplasm. The enzyme catalyses L-aspartate 4-semialdehyde + pyruvate = (2S,4S)-4-hydroxy-2,3,4,5-tetrahydrodipicolinate + H2O + H(+). It functions in the pathway amino-acid biosynthesis; L-lysine biosynthesis via DAP pathway; (S)-tetrahydrodipicolinate from L-aspartate: step 3/4. Catalyzes the condensation of (S)-aspartate-beta-semialdehyde [(S)-ASA] and pyruvate to 4-hydroxy-tetrahydrodipicolinate (HTPA). The chain is 4-hydroxy-tetrahydrodipicolinate synthase from Azoarcus sp. (strain BH72).